The following is a 274-amino-acid chain: Large ribosomal subunit protein uL2 (274 aa).

Disordered stretches follow at residues 28–53 and 223–274; these read APYA…TVRH and VAMN…RRNK. The span at 39-48 shows a compositional bias: low complexity; sequence KSGGRNNNGR.

The protein belongs to the universal ribosomal protein uL2 family. In terms of assembly, part of the 50S ribosomal subunit. Forms a bridge to the 30S subunit in the 70S ribosome.

In terms of biological role, one of the primary rRNA binding proteins. Required for association of the 30S and 50S subunits to form the 70S ribosome, for tRNA binding and peptide bond formation. It has been suggested to have peptidyltransferase activity; this is somewhat controversial. Makes several contacts with the 16S rRNA in the 70S ribosome. The protein is Large ribosomal subunit protein uL2 of Pseudoalteromonas atlantica (strain T6c / ATCC BAA-1087).